Consider the following 913-residue polypeptide: Eukaryotic translation initiation factor 3 subunit C (913 aa).

The disordered stretch occupies residues 1–44; sequence MSRFFTTGSDSESESSLSGEELVTKPVGGNYGKQPLLLSEDEED. Low complexity predominate over residues 8–21; the sequence is GSDSESESSLSGEE. 7 positions are modified to phosphoserine: Ser-9, Ser-11, Ser-13, Ser-15, Ser-16, Ser-18, and Ser-39. An N6-acetyllysine modification is found at Lys-99. 2 disordered regions span residues 157–301 and 522–542; these read TSYK…GGEW and QLTPPEGSSKSEQDQAENEGE. Phosphoserine occurs at positions 166, 178, 181, and 182. Residues 166–190 show a composition bias toward acidic residues; it reads SADEDAEKNEEDSEGSSDEDEDEDG. Basic and acidic residues predominate over residues 199-216; it reads KKSEAPSGESRKFLKKMD. Residues 217-232 are compositionally biased toward acidic residues; that stretch reads DEDEDSEDSEDDEDWD. Residues 261–278 show a composition bias toward basic and acidic residues; that stretch reads PTTDEDKKAAEKKREDKA. A compositionally biased stretch (polar residues) spans 522 to 531; that stretch reads QLTPPEGSSK. A Phosphothreonine modification is found at Thr-524. Position 643 is an N6-acetyllysine (Lys-643). The 177-residue stretch at 673-849 folds into the PCI domain; that stretch reads FHLHINLELL…QTVVMHRTEP (177 aa). The disordered stretch occupies residues 885–913; the sequence is FRDQKDGYRKNEGYMRRGGYRQQQSQTAY. Residues 886-899 are compositionally biased toward basic and acidic residues; sequence RDQKDGYRKNEGYM. Ser-909 bears the Phosphoserine mark.

Belongs to the eIF-3 subunit C family. As to quaternary structure, component of the eukaryotic translation initiation factor 3 (eIF-3) complex, which is composed of 13 subunits: EIF3A, EIF3B, EIF3C, EIF3D, EIF3E, EIF3F, EIF3G, EIF3H, EIF3I, EIF3J, EIF3K, EIF3L and EIF3M. The eIF-3 complex appears to include 3 stable modules: module A is composed of EIF3A, EIF3B, EIF3G and EIF3I; module B is composed of EIF3F, EIF3H, and EIF3M; and module C is composed of EIF3C, EIF3D, EIF3E, EIF3K and EIF3L. EIF3C of module C binds EIF3B of module A and EIF3H of module B, thereby linking the three modules. EIF3J is a labile subunit that binds to the eIF-3 complex via EIF3B. The eIF-3 complex interacts with RPS6KB1 under conditions of nutrient depletion. Mitogenic stimulation leads to binding and activation of a complex composed of MTOR and RPTOR, leading to phosphorylation and release of RPS6KB1 and binding of EIF4B to eIF-3. Interacts with ALKBH4, IFIT1 and IFIT2. Interacts with BZW2/5MP1. Phosphorylated. Phosphorylation is enhanced upon serum stimulation.

The protein localises to the cytoplasm. Component of the eukaryotic translation initiation factor 3 (eIF-3) complex, which is required for several steps in the initiation of protein synthesis. The eIF-3 complex associates with the 40S ribosome and facilitates the recruitment of eIF-1, eIF-1A, eIF-2:GTP:methionyl-tRNAi and eIF-5 to form the 43S pre-initiation complex (43S PIC). The eIF-3 complex stimulates mRNA recruitment to the 43S PIC and scanning of the mRNA for AUG recognition. The eIF-3 complex is also required for disassembly and recycling of post-termination ribosomal complexes and subsequently prevents premature joining of the 40S and 60S ribosomal subunits prior to initiation. The eIF-3 complex specifically targets and initiates translation of a subset of mRNAs involved in cell proliferation, including cell cycling, differentiation and apoptosis, and uses different modes of RNA stem-loop binding to exert either translational activation or repression. The polypeptide is Eukaryotic translation initiation factor 3 subunit C (Pongo abelii (Sumatran orangutan)).